The chain runs to 195 residues: Imidazoleglycerol-phosphate dehydratase (195 aa).

It belongs to the imidazoleglycerol-phosphate dehydratase family.

It is found in the cytoplasm. The catalysed reaction is D-erythro-1-(imidazol-4-yl)glycerol 3-phosphate = 3-(imidazol-4-yl)-2-oxopropyl phosphate + H2O. It participates in amino-acid biosynthesis; L-histidine biosynthesis; L-histidine from 5-phospho-alpha-D-ribose 1-diphosphate: step 6/9. The polypeptide is Imidazoleglycerol-phosphate dehydratase (Citrifermentans bemidjiense (strain ATCC BAA-1014 / DSM 16622 / JCM 12645 / Bem) (Geobacter bemidjiensis)).